Reading from the N-terminus, the 33-residue chain is MDLEVIAQLTVLTLMVVSGPLVIVLSAIRKGNL.

A helical transmembrane segment spans residues 5 to 25 (VIAQLTVLTLMVVSGPLVIVL).

The protein belongs to the Psb30/Ycf12 family. In terms of assembly, PSII is composed of 1 copy each of membrane proteins PsbA, PsbB, PsbC, PsbD, PsbE, PsbF, PsbH, PsbI, PsbJ, PsbK, PsbL, PsbM, PsbT, PsbX, PsbY, PsbZ, Psb30/Ycf12, peripheral proteins of the oxygen-evolving complex and a large number of cofactors. It forms dimeric complexes.

The protein resides in the plastid. It is found in the chloroplast thylakoid membrane. Its function is as follows. A core subunit of photosystem II (PSII), probably helps stabilize the reaction center. This Pinus koraiensis (Korean pine) protein is Photosystem II reaction center protein Psb30.